The chain runs to 881 residues: Alanine--tRNA ligase (881 aa).

Positions 566, 570, 668, and 672 each coordinate Zn(2+).

This sequence belongs to the class-II aminoacyl-tRNA synthetase family. It depends on Zn(2+) as a cofactor.

The protein resides in the cytoplasm. It carries out the reaction tRNA(Ala) + L-alanine + ATP = L-alanyl-tRNA(Ala) + AMP + diphosphate. Its function is as follows. Catalyzes the attachment of alanine to tRNA(Ala) in a two-step reaction: alanine is first activated by ATP to form Ala-AMP and then transferred to the acceptor end of tRNA(Ala). Also edits incorrectly charged Ser-tRNA(Ala) and Gly-tRNA(Ala) via its editing domain. The protein is Alanine--tRNA ligase of Frankia casuarinae (strain DSM 45818 / CECT 9043 / HFP020203 / CcI3).